The following is a 212-amino-acid chain: Redox-sensing transcriptional repressor Rex (212 aa).

A DNA-binding region (H-T-H motif) is located at residues 17-56; the sequence is LYARSLRYLLEEGVHSVSSQELGERINVTAAQIRKDLSYF. NAD(+) is bound at residue 91–96; sequence GIGLLG.

It belongs to the transcriptional regulatory Rex family. Homodimer.

It localises to the cytoplasm. Functionally, modulates transcription in response to changes in cellular NADH/NAD(+) redox state. This chain is Redox-sensing transcriptional repressor Rex, found in Chloroflexus aurantiacus (strain ATCC 29366 / DSM 635 / J-10-fl).